Consider the following 903-residue polypeptide: Dual serine/threonine and tyrosine protein kinase (903 aa).

The stretch at 382 to 414 forms a coiled coil; the sequence is ANRKQEEMKEMIVETLESMKEQLLEDAANLEFT. The Protein kinase domain occupies 627-881; that stretch reads PKLGRELGRG…PLLGIVQPSL (255 aa). ATP is bound by residues 633–641 and Lys-656; that span reads LGRGQYGVV. The Proton acceptor role is filled by Asp-752.

This sequence belongs to the protein kinase superfamily. Ser/Thr protein kinase family.

The protein localises to the cytoplasm. The protein resides in the cell membrane. It localises to the apical cell membrane. Its subcellular location is the basolateral cell membrane. It is found in the cell junction. The catalysed reaction is L-seryl-[protein] + ATP = O-phospho-L-seryl-[protein] + ADP + H(+). The enzyme catalyses L-threonyl-[protein] + ATP = O-phospho-L-threonyl-[protein] + ADP + H(+). It carries out the reaction L-tyrosyl-[protein] + ATP = O-phospho-L-tyrosyl-[protein] + ADP + H(+). Functionally, may act as a positive regulator of ERK phosphorylation downstream of fibroblast growth factor-receptor activation. May induce both caspase-dependent apoptosis and caspase-independent cell death. May play a role in the embryonic development. This is Dual serine/threonine and tyrosine protein kinase from Pimephales promelas (Fathead minnow).